We begin with the raw amino-acid sequence, 511 residues long: Probable endopeptidase p60 (511 aa).

Residues 1 to 27 form the signal peptide; sequence MNMKKATIVSAAGIAVTAFAAPSVVSA. Positions 28 to 71 constitute a LysM 1 domain; sequence NTVVVASGDTLWGIASKTGTTVDQLKQLNKLDSDRIVPGQKLTI. The SH3b domain maps to 78-142; sequence KVEKSVSATW…VNGKYLSDAK (65 aa). Residues 175–218 form the LysM 2 domain; sequence STYKVKSGDTIWALSVKYGVPVQKLIEWNNLSSSSIYVGQTIAV. Composition is skewed to low complexity over residues 229–257 and 264–282; these read TVKQ…QAKP and KPAV…AKPA. Positions 229–291 are disordered; the sequence is TVKQAAPAKV…AVEQKASTPA (63 aa). One can recognise a LysM 3 domain in the interval 297–341; the sequence is ATYKVQNGDSLGKIASLFKVSVADLTNWNNLNATITIYAGQELSV. Composition is skewed to low complexity over residues 347–362 and 372–390; these read KPKP…SKPA and TNTT…NTSQ. The segment at 347–390 is disordered; the sequence is KPKPAAPAKPAVSKPATSTPAKVTPTNTTNNSTPTTNVNNNTSQ. Residues 393-511 enclose the NlpC/P60 domain; the sequence is SASFSALYAE…GQYLVGFGRV (119 aa). The active-site Nucleophile is Cys423. His473 acts as the Proton acceptor in catalysis. Residue Asp485 is part of the active site.

It belongs to the peptidase C40 family.

Its function is as follows. This major extracellular protein may be involved in the invasion of non-professional phagocytic cells by Listeria. This chain is Probable endopeptidase p60 (iap), found in Listeria grayi (Listeria murrayi).